A 757-amino-acid polypeptide reads, in one-letter code: 5-methyltetrahydropteroyltriglutamate--homocysteine methyltransferase (757 aa).

Residues 16–19 (RELK) and lysine 112 contribute to the 5-methyltetrahydropteroyltri-L-glutamate site. L-homocysteine-binding positions include 432–434 (IGS) and glutamate 485. L-methionine-binding positions include 432-434 (IGS) and glutamate 485. 5-methyltetrahydropteroyltri-L-glutamate-binding positions include 516 to 517 (RC) and tryptophan 562. L-homocysteine is bound at residue aspartate 600. Position 600 (aspartate 600) interacts with L-methionine. Position 606 (glutamate 606) interacts with 5-methyltetrahydropteroyltri-L-glutamate. Residues histidine 642, cysteine 644, and glutamate 666 each contribute to the Zn(2+) site. Histidine 695 serves as the catalytic Proton donor. Cysteine 727 serves as a coordination point for Zn(2+).

This sequence belongs to the vitamin-B12 independent methionine synthase family. Zn(2+) serves as cofactor.

The catalysed reaction is 5-methyltetrahydropteroyltri-L-glutamate + L-homocysteine = tetrahydropteroyltri-L-glutamate + L-methionine. It participates in amino-acid biosynthesis; L-methionine biosynthesis via de novo pathway; L-methionine from L-homocysteine (MetE route): step 1/1. Functionally, catalyzes the transfer of a methyl group from 5-methyltetrahydrofolate to homocysteine resulting in methionine formation. The polypeptide is 5-methyltetrahydropteroyltriglutamate--homocysteine methyltransferase (Actinobacillus pleuropneumoniae serotype 5b (strain L20)).